Consider the following 315-residue polypeptide: Borealin (315 aa).

Disordered stretches follow at residues 103-126 (IEGH…GASG) and 138-226 (LRST…TPPM). Phosphothreonine is present on Thr146. Residue Ser152 is modified to Phosphoserine. A compositionally biased stretch (basic residues) spans 153–162 (ARARRARRSR). Ser163 is subject to Phosphoserine. Over residues 178–188 (SISSSSSSSRN) the composition is skewed to low complexity. Ser205 carries the post-translational modification Phosphoserine. Thr209 carries the phosphothreonine modification. Residues Ser218, Ser220, and Ser244 each carry the phosphoserine modification.

Belongs to the borealin family. Component of the CPC complex. In terms of tissue distribution, ubiquitously expressed in the early embryo. Expression is restricted to the ventral nerve cord and brain during later embryonic stages.

It localises to the nucleus. Its subcellular location is the chromosome. The protein resides in the centromere. The protein localises to the cytoplasm. It is found in the cytoskeleton. It localises to the spindle. Functionally, component of the chromosomal passenger complex (CPC), a complex that acts as a key regulator of embryonic mitosis. The CPC complex has essential functions at the centromere for ensuring sister chromatid cohesion, recruitment of the CPC to kinetochores, and chromosome alignment and segregation. There is no function in meiotic histone phosphorylation or spindle formation. The polypeptide is Borealin (borr) (Drosophila melanogaster (Fruit fly)).